The following is a 354-amino-acid chain: tRNA N6-adenosine threonylcarbamoyltransferase (354 aa).

H111 and H115 together coordinate Fe cation. Substrate-binding positions include 134–138 (LVSGG), D167, G180, and N279. D319 contacts Fe cation.

The protein belongs to the KAE1 / TsaD family. Fe(2+) serves as cofactor.

It is found in the cytoplasm. The enzyme catalyses L-threonylcarbamoyladenylate + adenosine(37) in tRNA = N(6)-L-threonylcarbamoyladenosine(37) in tRNA + AMP + H(+). In terms of biological role, required for the formation of a threonylcarbamoyl group on adenosine at position 37 (t(6)A37) in tRNAs that read codons beginning with adenine. Is involved in the transfer of the threonylcarbamoyl moiety of threonylcarbamoyl-AMP (TC-AMP) to the N6 group of A37, together with TsaE and TsaB. TsaD likely plays a direct catalytic role in this reaction. In Neisseria meningitidis serogroup C / serotype 2a (strain ATCC 700532 / DSM 15464 / FAM18), this protein is tRNA N6-adenosine threonylcarbamoyltransferase.